The following is a 209-amino-acid chain: Mitochondrial import inner membrane translocase subunit Tim23 (209 aa).

3 helical membrane-spanning segments follow: residues 73–93 (FELA…FGAM), 125–145 (ALWA…GVII), and 172–194 (GGLR…YALY).

It belongs to the Tim17/Tim22/Tim23 family. As to quaternary structure, component of the TIM23 complex at least composed of TIMM23, TIMM17 (TIMM17A or TIMM17B) and TIMM50; within this complex, directly interacts with TIMM50. The complex interacts with the TIMM44 component of the PAM complex and with DNAJC15. Upon mitochondrial depolarization, interacts with PINK1; the interaction is required for PINK1 accumulation at the outer mitochondrial membrane, kinase activation by autophosphorylation and PRKN recruitement to mitochondria.

The protein resides in the mitochondrion inner membrane. Functionally, essential component of the TIM23 complex, a complex that mediates the translocation of transit peptide-containing proteins across the mitochondrial inner membrane. Has a role in the activation of stress-induced mitophagy by protecting PINK1 from OMA1-mediated degradation and facilitating its accumulation at the outer mitochondrial membrane in response to depolarization. This is Mitochondrial import inner membrane translocase subunit Tim23 (TIMM23) from Pongo abelii (Sumatran orangutan).